The sequence spans 150 residues: Transcriptional repressor NrdR (150 aa).

The segment at 3–34 (CPYCQFEDTRVIDSRLASEGEQVRRRRECNRC) is a zinc-finger region. An ATP-cone domain is found at 49 to 139 (PRIVKRDGTR…VYRSFEDVSA (91 aa)).

This sequence belongs to the NrdR family. Requires Zn(2+) as cofactor.

Negatively regulates transcription of bacterial ribonucleotide reductase nrd genes and operons by binding to NrdR-boxes. In Alkalilimnicola ehrlichii (strain ATCC BAA-1101 / DSM 17681 / MLHE-1), this protein is Transcriptional repressor NrdR.